A 956-amino-acid polypeptide reads, in one-letter code: Dual specificity protein kinase YAK1 homolog (956 aa).

In terms of domain architecture, Protein kinase spans 122-464 (YIVKDLLGHG…PFQAAKHPFI (343 aa)). Residues 128–136 (LGHGTFGQV) and lysine 151 each bind ATP. The residue at position 222 (serine 222) is a Phosphoserine. Residue aspartate 249 is the Proton acceptor of the active site. Disordered regions lie at residues 620 to 657 (LGTSPSQFTPNTNNQFLAGSPGHHGPTSPVRNSCHGSP), 672 to 781 (SAGY…NYSD), and 806 to 956 (GSTD…GSIA). Positions 622–636 (TSPSQFTPNTNNQFL) are enriched in polar residues. The segment covering 672 to 691 (SAGYSGGSQSQDSSLSQAQG) has biased composition (low complexity). Polar residues-rich tracts occupy residues 697–713 (FYQNEGYSGQFSGSPSR), 725–757 (QTQGGTTLSTGYSTHNNANSSLRSNMYNPSSTA), and 806–817 (GSTDASSYSRRF). The span at 818–830 (NSNASTSSSNPTT) shows a compositional bias: low complexity. 3 stretches are compositionally biased toward polar residues: residues 838–849 (QAFSQVETGSPP), 870–884 (VSQNSPSRLGQQPPQ), and 902–912 (MNAQLPPSNTN). A compositionally biased stretch (low complexity) spans 913 to 924 (SGGQQRSPRSSS). The span at 937–947 (NHVPNVPSTSH) shows a compositional bias: polar residues.

It belongs to the protein kinase superfamily. Ser/Thr protein kinase family. In terms of processing, autophosphorylated at Ser-222.

The catalysed reaction is L-seryl-[protein] + ATP = O-phospho-L-seryl-[protein] + ADP + H(+). The enzyme catalyses L-threonyl-[protein] + ATP = O-phospho-L-threonyl-[protein] + ADP + H(+). It catalyses the reaction L-tyrosyl-[protein] + ATP = O-phospho-L-tyrosyl-[protein] + ADP + H(+). In terms of biological role, dual specificity protein kinase that phosphorylates ANN1, ANN2 and CP29B at serine and threonine residues, and ANN1, ANN2 and ANN4 at tyrosine residues. May regulate the phosphorylation status of annexin proteins. Acts as a positive regulator in abscisic acid (ABA)-mediated regulation of postgermination growth and drought response. May regulate the expression of ABA-responsive genes such as RD22, RD29A, LTI65/RD29B and RAB18. In Arabidopsis thaliana (Mouse-ear cress), this protein is Dual specificity protein kinase YAK1 homolog.